The following is a 274-amino-acid chain: Tryptophan synthase alpha chain (274 aa).

Residues glutamate 49 and aspartate 60 each act as proton acceptor in the active site.

Belongs to the TrpA family. As to quaternary structure, tetramer of two alpha and two beta chains.

The enzyme catalyses (1S,2R)-1-C-(indol-3-yl)glycerol 3-phosphate + L-serine = D-glyceraldehyde 3-phosphate + L-tryptophan + H2O. It functions in the pathway amino-acid biosynthesis; L-tryptophan biosynthesis; L-tryptophan from chorismate: step 5/5. Functionally, the alpha subunit is responsible for the aldol cleavage of indoleglycerol phosphate to indole and glyceraldehyde 3-phosphate. This Alkalilimnicola ehrlichii (strain ATCC BAA-1101 / DSM 17681 / MLHE-1) protein is Tryptophan synthase alpha chain.